The primary structure comprises 162 residues: 2-C-methyl-D-erythritol 2,4-cyclodiphosphate synthase (162 aa).

Positions 10 and 12 each coordinate a divalent metal cation. Residues 10-12 (DVH) and 36-37 (HS) each bind 4-CDP-2-C-methyl-D-erythritol 2-phosphate. Residue H44 participates in a divalent metal cation binding. Residues 58–60 (DIG), 63–67 (FSDTD), and R144 contribute to the 4-CDP-2-C-methyl-D-erythritol 2-phosphate site.

The protein belongs to the IspF family. Homotrimer. Requires a divalent metal cation as cofactor.

The enzyme catalyses 4-CDP-2-C-methyl-D-erythritol 2-phosphate = 2-C-methyl-D-erythritol 2,4-cyclic diphosphate + CMP. Its pathway is isoprenoid biosynthesis; isopentenyl diphosphate biosynthesis via DXP pathway; isopentenyl diphosphate from 1-deoxy-D-xylulose 5-phosphate: step 4/6. Its function is as follows. Involved in the biosynthesis of isopentenyl diphosphate (IPP) and dimethylallyl diphosphate (DMAPP), two major building blocks of isoprenoid compounds. Catalyzes the conversion of 4-diphosphocytidyl-2-C-methyl-D-erythritol 2-phosphate (CDP-ME2P) to 2-C-methyl-D-erythritol 2,4-cyclodiphosphate (ME-CPP) with a corresponding release of cytidine 5-monophosphate (CMP). The chain is 2-C-methyl-D-erythritol 2,4-cyclodiphosphate synthase from Burkholderia mallei (strain NCTC 10247).